Reading from the N-terminus, the 219-residue chain is Holliday junction branch migration complex subunit RuvA (219 aa).

The segment at 1-71 (MISWIKGELV…EDSDMLFGFS (71 aa)) is domain I. Positions 72–150 (TKDQRDFFIQ…NKEIEKENLN (79 aa)) are domain II. The tract at residues 151-161 (INNFLEKNKDL) is flexible linker. The segment at 161 to 219 (LDSIFKDIDLTLQSLNYSKKEIKNLFPKLINNIKNSSLEKESISFENLLKEAMNYLDHK) is domain III.

Belongs to the RuvA family. In terms of assembly, homotetramer. Forms an RuvA(8)-RuvB(12)-Holliday junction (HJ) complex. HJ DNA is sandwiched between 2 RuvA tetramers; dsDNA enters through RuvA and exits via RuvB. An RuvB hexamer assembles on each DNA strand where it exits the tetramer. Each RuvB hexamer is contacted by two RuvA subunits (via domain III) on 2 adjacent RuvB subunits; this complex drives branch migration. In the full resolvosome a probable DNA-RuvA(4)-RuvB(12)-RuvC(2) complex forms which resolves the HJ.

Its subcellular location is the cytoplasm. Functionally, the RuvA-RuvB-RuvC complex processes Holliday junction (HJ) DNA during genetic recombination and DNA repair, while the RuvA-RuvB complex plays an important role in the rescue of blocked DNA replication forks via replication fork reversal (RFR). RuvA specifically binds to HJ cruciform DNA, conferring on it an open structure. The RuvB hexamer acts as an ATP-dependent pump, pulling dsDNA into and through the RuvAB complex. HJ branch migration allows RuvC to scan DNA until it finds its consensus sequence, where it cleaves and resolves the cruciform DNA. The polypeptide is Holliday junction branch migration complex subunit RuvA (Prochlorococcus marinus subsp. pastoris (strain CCMP1986 / NIES-2087 / MED4)).